Reading from the N-terminus, the 419-residue chain is UDP-N-acetylglucosamine 1-carboxyvinyltransferase (419 aa).

Residue 22–23 (KN) coordinates phosphoenolpyruvate. Arg-93 contacts UDP-N-acetyl-alpha-D-glucosamine. Residue Cys-117 is the Proton donor of the active site. 2-(S-cysteinyl)pyruvic acid O-phosphothioketal is present on Cys-117. The UDP-N-acetyl-alpha-D-glucosamine site is built by Asp-306 and Ile-328.

This sequence belongs to the EPSP synthase family. MurA subfamily.

It localises to the cytoplasm. It carries out the reaction phosphoenolpyruvate + UDP-N-acetyl-alpha-D-glucosamine = UDP-N-acetyl-3-O-(1-carboxyvinyl)-alpha-D-glucosamine + phosphate. It functions in the pathway cell wall biogenesis; peptidoglycan biosynthesis. Cell wall formation. Adds enolpyruvyl to UDP-N-acetylglucosamine. In Magnetococcus marinus (strain ATCC BAA-1437 / JCM 17883 / MC-1), this protein is UDP-N-acetylglucosamine 1-carboxyvinyltransferase.